Reading from the N-terminus, the 136-residue chain is UPF0275 protein PM0493 (136 aa).

The protein belongs to the UPF0275 family.

The polypeptide is UPF0275 protein PM0493 (Pasteurella multocida (strain Pm70)).